The primary structure comprises 1406 residues: DNA-directed RNA polymerase subunit beta' (1406 aa).

Positions 72, 74, 87, and 90 each coordinate Zn(2+). Positions 462, 464, and 466 each coordinate Mg(2+). The Zn(2+) site is built by Cys-816, Cys-891, Cys-898, and Cys-901.

It belongs to the RNA polymerase beta' chain family. As to quaternary structure, the RNAP catalytic core consists of 2 alpha, 1 beta, 1 beta' and 1 omega subunit. When a sigma factor is associated with the core the holoenzyme is formed, which can initiate transcription. Requires Mg(2+) as cofactor. It depends on Zn(2+) as a cofactor.

It catalyses the reaction RNA(n) + a ribonucleoside 5'-triphosphate = RNA(n+1) + diphosphate. Functionally, DNA-dependent RNA polymerase catalyzes the transcription of DNA into RNA using the four ribonucleoside triphosphates as substrates. This Psychrobacter arcticus (strain DSM 17307 / VKM B-2377 / 273-4) protein is DNA-directed RNA polymerase subunit beta'.